Here is a 505-residue protein sequence, read N- to C-terminus: Protein disulfide-isomerase (505 aa).

The first 20 residues, 1 to 20 (MHKAQKFALGLLAAAAVATA), serve as a signal peptide directing secretion. Thioredoxin domains lie at 21-128 (SDVV…QSLP) and 335-465 (FVAG…ENGK). Residues cysteine 50, cysteine 53, cysteine 385, and cysteine 388 each act as nucleophile in the active site. 2 disulfide bridges follow: cysteine 50–cysteine 53 and cysteine 385–cysteine 388. The interval 470–505 (ISEDAEETSSATETTTETATKSEEAAKETATEHDEL) is disordered. Residues 477–488 (TSSATETTTETA) show a composition bias toward low complexity. Positions 489–505 (TKSEEAAKETATEHDEL) are enriched in basic and acidic residues. Residues 502–505 (HDEL) carry the Prevents secretion from ER motif.

The protein belongs to the protein disulfide isomerase family.

Its subcellular location is the endoplasmic reticulum lumen. The catalysed reaction is Catalyzes the rearrangement of -S-S- bonds in proteins.. In terms of biological role, participates in the folding of proteins containing disulfide bonds, may be involved in glycosylation, prolyl hydroxylation and triglyceride transfer. This Humicola insolens (Soft-rot fungus) protein is Protein disulfide-isomerase.